The following is a 452-amino-acid chain: Bone morphogenetic protein 5 (452 aa).

The first 25 residues, 1 to 25 (MHWTVFLLRGIVGFLWSGWVQVGYA), serve as a signal peptide directing secretion. Residues 26–314 (KGGLGDNHVH…ASEVLLRSVR (289 aa)) constitute a propeptide that is removed on maturation. N-linked (GlcNAc...) asparagine glycans are attached at residues N209, N325, N343, and N393. The segment at 316–345 (ASKRKNQNRNKSNSHQDPSRMPSAGDYNTS) is disordered. Cystine bridges form between C351–C417, C380–C449, and C384–C451.

This sequence belongs to the TGF-beta family. As to quaternary structure, interacts with ERFE; the interaction inhibits BMP-induced transcription of HAMP.

The protein localises to the secreted. Functionally, growth factor of the TGF-beta superfamily that plays essential roles in many developmental processes, including cartilage and bone formation or neurogenesis. Initiates the canonical BMP signaling cascade by associating with type I receptor BMPR1A and type II receptor BMPR2. In turn, BMPR1A propagates signal by phosphorylating SMAD1/5/8 that travel to the nucleus and act as activators and repressors of transcription of target genes. Can also signal through non-canonical pathway such as MAPK p38 signaling cascade to promote chondrogenic differentiation. Promotes the expression of HAMP, this is repressed by its interaction with ERFE. The chain is Bone morphogenetic protein 5 (Bmp5) from Mus musculus (Mouse).